We begin with the raw amino-acid sequence, 479 residues long: Serine protease HTRA1A (479 aa).

The signal sequence occupies residues Met1–Ala18. One can recognise an IGFBP N-terminal domain in the interval Val27–Lys111. 6 disulfides stabilise this stretch: Cys31–Cys56, Cys35–Cys58, Cys40–Cys59, Cys47–Cys62, Cys70–Cys87, and Cys81–Cys108. The 60-residue stretch at Ser96–Thr155 folds into the Kazal-like domain. A serine protease region spans residues Gly203 to Leu363. Catalysis depends on charge relay system residues His219, Asp249, and Ser327. Residues Ala364–Glu466 form the PDZ domain.

It belongs to the peptidase S1C family. Forms homotrimers. In the presence of substrate, may form higher-order multimers in a PDZ-independent manner.

The protein resides in the secreted. It is found in the cytoplasm. It localises to the cytosol. In terms of biological role, serine protease with a variety of targets, including extracellular matrix proteins and proteoglycans. Through cleavage of proteoglycans, may release soluble FGF-glycosaminoglycan complexes that promote the range and intensity of FGF signals in the extracellular space. Regulates the availability of insulin-like growth factors (IGFs) by cleaving IGF-binding proteins. Inhibits signaling mediated by TGF-beta family members. Consequently, may regulate many physiological processes. Intracellularly, degrades TSC2, leading to the activation of TSC2 downstream targets. The sequence is that of Serine protease HTRA1A (htra1a) from Danio rerio (Zebrafish).